Consider the following 271-residue polypeptide: Proteasome inhibitor PI31 subunit (271 aa).

Residue Ala2 is modified to N-acetylalanine. The interval 2–150 is important for homodimerization and interaction with FBXO7; that stretch reads AGLEVLFASA…PIHEQWEKAN (149 aa). Ser153 bears the Phosphoserine mark. At Arg205 the chain carries Omega-N-methylarginine. Residue Arg219 is modified to Asymmetric dimethylarginine. The disordered stretch occupies residues 222-271; that stretch reads IDPSSGLPNRLPPGAVPPGARFDPFGPIGTSPPGPNPDHLPPPGYDDMYL. An Omega-N-methylarginine modification is found at Arg231. Over residues 251-265 the composition is skewed to pro residues; that stretch reads TSPPGPNPDHLPPPG. Phosphoserine is present on Ser252.

Belongs to the proteasome inhibitor PI31 family. As to quaternary structure, monomer and homodimer. Interacts with FBXO7. Interacts with the 20S proteasome.

It is found in the cytoplasm. It localises to the endoplasmic reticulum. Functionally, plays an important role in control of proteasome function. Inhibits the hydrolysis of protein and peptide substrates by the 20S proteasome. Also inhibits the activation of the proteasome by the proteasome regulatory proteins PA700 and PA28. The sequence is that of Proteasome inhibitor PI31 subunit (PSMF1) from Homo sapiens (Human).